A 186-amino-acid polypeptide reads, in one-letter code: MKRLWLTGYRSYELGVFGDSGEKLKVIKYSLKKQLNNYLDDGLEWLITGGQMGIEQWGIQVAQELKIDYPELKVAMMLPFSDFGQQWNEQNQGTLMTLKAQVDFCEPVIKAPYSGPQQLRQYQQFMLTHTDGALLYYDREAPGKPEYDAKAIETYQEQHEYPNNQVDFFELQDLANELAELENQAF.

Belongs to the UPF0398 family.

The chain is UPF0398 protein LCA_0919 from Latilactobacillus sakei subsp. sakei (strain 23K) (Lactobacillus sakei subsp. sakei).